The following is a 137-amino-acid chain: Global transcriptional regulator Spx (137 aa).

Residues cysteine 10 and cysteine 13 are joined by a disulfide bond.

It belongs to the ArsC family. Spx subfamily. Interacts with the C-terminal domain of the alpha subunit of the RNAP.

It is found in the cytoplasm. Its function is as follows. Global transcriptional regulator that plays a key role in stress response and exerts either positive or negative regulation of genes. Acts by interacting with the C-terminal domain of the alpha subunit of the RNA polymerase (RNAP). This interaction can enhance binding of RNAP to the promoter region of target genes and stimulate their transcription, or block interaction of RNAP with activator. The chain is Global transcriptional regulator Spx from Streptococcus agalactiae serotype III (strain NEM316).